The chain runs to 480 residues: Cysteine--tRNA ligase (480 aa).

C27 is a Zn(2+) binding site. The short motif at 29–39 (PTVYNYAHIGN) is the 'HIGH' region element. Zn(2+) is bound by residues C221, H246, and E250. Residues 278–282 (KMSKS) carry the 'KMSKS' region motif. K281 lines the ATP pocket.

This sequence belongs to the class-I aminoacyl-tRNA synthetase family. As to quaternary structure, monomer. Zn(2+) serves as cofactor.

It localises to the cytoplasm. The enzyme catalyses tRNA(Cys) + L-cysteine + ATP = L-cysteinyl-tRNA(Cys) + AMP + diphosphate. The polypeptide is Cysteine--tRNA ligase (Borreliella burgdorferi (strain ZS7) (Borrelia burgdorferi)).